A 632-amino-acid polypeptide reads, in one-letter code: Chaperone protein HtpG (632 aa).

The a; substrate-binding stretch occupies residues 1–345 (MTTAAHAETL…SKDLSLNVSR (345 aa)). Residues 346-561 (ELLQKDPQVD…EHDMGYQMRR (216 aa)) form a b region. The tract at residues 562 to 632 (LMEAAGQPLP…VQRLNKLLSH (71 aa)) is c.

This sequence belongs to the heat shock protein 90 family. In terms of assembly, homodimer.

The protein localises to the cytoplasm. In terms of biological role, molecular chaperone. Has ATPase activity. The sequence is that of Chaperone protein HtpG from Chromohalobacter salexigens (strain ATCC BAA-138 / DSM 3043 / CIP 106854 / NCIMB 13768 / 1H11).